A 127-amino-acid chain; its full sequence is Biogenesis of lysosome-related organelles complex 1 subunit 2 (127 aa).

It belongs to the BLOC1S2 family. As to quaternary structure, component of the biogenesis of lysosome-related organelles complex-1 (BLOC-1). Interacts with BLOS1 and SNX1.

The protein localises to the cytoplasm. Its subcellular location is the endosome. Component of the biogenesis of lysosome-related organelles complex-1 (BLOC-1), a complex that mediates the vacuolar degradative transport via the intracellular vesicle trafficking from the endosome to the vacuole. The sequence is that of Biogenesis of lysosome-related organelles complex 1 subunit 2 (BLOS2) from Arabidopsis thaliana (Mouse-ear cress).